The primary structure comprises 466 residues: Adenosylhomocysteinase (466 aa).

Residues Thr57, Asp132, and Glu192 each contribute to the substrate site. 193 to 195 (TTT) serves as a coordination point for NAD(+). 2 residues coordinate substrate: Lys222 and Asp226. Residues Asn227, 256–261 (GYGDVG), Glu279, Asn314, 335–337 (IGH), and Asn380 each bind NAD(+).

This sequence belongs to the adenosylhomocysteinase family. NAD(+) is required as a cofactor.

The protein localises to the cytoplasm. It carries out the reaction S-adenosyl-L-homocysteine + H2O = L-homocysteine + adenosine. Its pathway is amino-acid biosynthesis; L-homocysteine biosynthesis; L-homocysteine from S-adenosyl-L-homocysteine: step 1/1. Its function is as follows. May play a key role in the regulation of the intracellular concentration of adenosylhomocysteine. This is Adenosylhomocysteinase from Rhizobium leguminosarum bv. trifolii (strain WSM2304).